Consider the following 357-residue polypeptide: MRRTTRARTGLSALLLAASLGLGAAPAGADAPQRPAPTPASDSAAALHALDAAVERTLGDDSAGTYVDAGTGELVVTVTTEAAAAKVRAAGATPRRVQRGAAELDAAMAALEARAKIPGTSWGLDPRTNRIAVEADSSVSARDLARLRKVAASLDGAVSVTRVPGVFQREVAGGDAIYGGGSRCSAAFNVTKNGVRYFLTAGHCTNLSSTWSSTSGGTSIGVREGTSFPTNDYGIVRYTTTTNVDGRVNLYNGGYQDIASAADAVVGQAIKKSGSTTKVTSGTVSAVNVTVNYSDGPVYGMVRTTACSAGGDSGGAHFAGSVALGIHSGSSGCTGTNGSAIHQPVREALSAYGVNVY.

An N-terminal signal peptide occupies residues 1 to 29 (MRRTTRARTGLSALLLAASLGLGAAPAGA). Positions 30-170 (DAPQRPAPTP…TRVPGVFQRE (141 aa)) are excised as a propeptide. The cysteines at positions 184 and 204 are disulfide-linked. Active-site charge relay system residues include histidine 203, aspartate 232, and serine 313. An intrachain disulfide couples cysteine 307 to cysteine 333.

This sequence belongs to the peptidase S1 family.

It is found in the secreted. In terms of biological role, serine protease that preferentially cleaves peptide bonds on the C-terminal side of aspartate and glutamate with a 10-fold higher reactivity for a glutamyl bond than an aspartyl bond. The sequence is that of Serine protease 1 from Streptomyces fradiae (Streptomyces roseoflavus).